Here is an 849-residue protein sequence, read N- to C-terminus: Dopamine receptor 2 (849 aa).

At 1 to 39 the chain is on the extracellular side; it reads MEAGETWNVSLEWPPPSLDLSTITQTPSTIVGSGIPLNY. A glycan (N-linked (GlcNAc...) asparagine) is linked at asparagine 8. Residues 40-60 form a helical membrane-spanning segment; the sequence is AGLSLIVIPLITLLGNLLVII. The Cytoplasmic portion of the chain corresponds to 61-70; that stretch reads SVLRYRALQS. The helical transmembrane segment at 71–91 threads the bilayer; the sequence is AINFLILGLAVADLLVAIIVM. The Extracellular segment spans residues 92–112; sequence PYAVYVYVTNGDWYLGNLMCD. Cysteines 111 and 190 form a disulfide. Residues 113–133 form a helical membrane-spanning segment; the sequence is IYMASDVCCSTASILLLAVIS. At 134–155 the chain is on the cytoplasmic side; sequence FDRYRAVSLPIQYSRQSQNVKR. Residues 156–176 form a helical membrane-spanning segment; the sequence is VWTLIAVIWLVSLTLASPMVF. Residues 177 to 203 lie on the Extracellular side of the membrane; it reads GVNVRPPDANPYECRFYNAEFSILSSM. Positions 183 to 849 are required for the interaction with gpa-14; the sequence is PDANPYECRF…HHFSNKQAHV (667 aa). The helical transmembrane segment at 204 to 224 threads the bilayer; that stretch reads ISFVIPCFLVLFVYIRIIIAL. Residues 225–759 are Cytoplasmic-facing; the sequence is KKREKAAKMR…QRKEKRATKT (535 aa). Residues 450–515 are disordered; it reads RRSSYADDSQ…NNSRTASITN (66 aa). Over residues 457–470 the composition is skewed to low complexity; it reads DSQPTSSQTSSGDG. Positions 477 to 498 are enriched in basic residues; that stretch reads GQKRFRNLSRNYSTKHHRKVVK. The span at 501-515 shows a compositional bias: polar residues; that stretch reads RGNSRNNSRTASITN. The helical transmembrane segment at 760–780 threads the bilayer; the sequence is LGVVVGVFLVCWVPFFVINIL. The Extracellular segment spans residues 781–798; it reads NAVCILLNKDSCQVGYDL. The helical transmembrane segment at 799 to 819 threads the bilayer; that stretch reads FFYCTWIGYMNSFMNPIIYTI. Residues 820-849 are Cytoplasmic-facing; sequence FNTEFRRAFKSIIFGRNSTRHHFSNKQAHV.

This sequence belongs to the G-protein coupled receptor 1 family. As to quaternary structure, interacts (via C-terminus) with the G-alpha protein gpa-14; the interaction is direct. Expressed in all dopaminergic neurons. Expressed in neurons around the nerve ring and the posterior side of the body including PDE neurons. In hermaphrodites, expressed in the head and tail ganglia including in the RIA interneuron pair, and in a subset of sublateral interneurons and the PDA neuron in the tail. Expressed in cholinergic SIA neurons. Also expressed in the male tail. In males, expressed in the dorsal spicule protractor, ventral spicule protractor, dorsal spicule retractor and ventral spicule retractor muscles and the sensory post-cloacal sensilla B (PCB) neuron. In males, expressed in the sensory hook neurons HOA.

The protein resides in the cell membrane. In terms of biological role, G-protein coupled receptor which binds to the neurotransmitter dopamine with high affinity leading to the activation of an associated G-protein and downstream signaling pathways. Couples to G-proteins to inhibit adenylate cyclase (AC) activity and cAMP production. Inhibits synaptic vesicle fusion to negatively regulate the release of dopamine at dopaminergic neuron synapses. Antagonizes octopamine signaling in response to food by promoting the dopamine-mediated suppression of crh-1/CREB1 transcription factor activation in cholinergic SIA neurons. This is most likely in association with the G(o)-alpha G-protein subunit goa-1. In association with the G-alpha protein gpa-14, modulates two types of learning behavior: touch habituation and chemosensory associative conditioning. May act partly via tsp-17 to negatively regulate dopamine reuptake transporter dat-1 activity. Plays a role in behavioral plasticity and regulates the decision-making process when conflicting alternatives are present. Promotes male mating behavior by antagonizing acetylcholine signaling to control the protrusions of copulatory spicules from the tail of males during hermaphrodite vulval location. Modulates unc-7 activity at gap junctions to promote inhibitory neuronal signaling transduction between chemosensory and mechanosensory neurons, and thus ensures spicule insertion attempts are confined to the hermaphrodite vulva during copulation. G-protein coupled receptor which binds to the neurotransmitter dopamine with high affinity leading to the activation of an associated G-protein and downstream signaling pathways. Couples to G-proteins to inhibit adenylate cyclase (AC) activity and cAMP production. In Caenorhabditis elegans, this protein is Dopamine receptor 2.